A 626-amino-acid polypeptide reads, in one-letter code: METKQFKAESKRLLDLMIHSIYTQKEIFLRELISNASDAIDKIYYRALTDEALNFNKEDYYIKIIPDKEKRILRIIDTGIGMTKEELEENLGVIAKSGSLAFKSAHELKDGYDIIGQFGVGFYSSFMVAETVTVISKSIDSESGYKWESTGVDGYTIEPWDKDTVGTEIVLRIKEDTEDENYSEYLEEYRLRNIIKKYSDFIRYPIKMDIHNKRLKENSEDDYEDYVEEQTINSMVPIWRKNKNELTKEDYDNFYMEKRYGFDKPVKHIHISADGAVRYNAILFIPERTPFDYYTKEYEKGLELYSNGVLIMNKCSDLLPDYFSFVKGMVDSEDLSLNISREMLQHDRQLKLIGKNIKNKIKNELMSLLKEDRTQYEAFFEAFGRQLKYGIYSEFGSNKDVLQDLLLFYSSKEKKLVTLDEYISRMSEEQKYIYYATGESKERIEKLPQTELVSEKGFEILYLTEDIDEFAIKVLMSYKDKEFKSVSSSDLGIEDSETEKNTETEELENKELFEKMTALLSDKVTAVRISKRLKSHPVCLANEGEISIEMEKILSAMPNNENIKANKILEINGNHQVFEVLKDAYKNDSEKFGLFTELLYNQALLIEGLPINDPVEFSNSICKLMI.

The interval 1–341 (METKQFKAES…SEDLSLNISR (341 aa)) is a; substrate-binding. The segment at 342 to 552 (EMLQHDRQLK…EGEISIEMEK (211 aa)) is b. Residues 553-626 (ILSAMPNNEN…FSNSICKLMI (74 aa)) are c.

It belongs to the heat shock protein 90 family. In terms of assembly, homodimer.

Its subcellular location is the cytoplasm. Functionally, molecular chaperone. Has ATPase activity. This chain is Chaperone protein HtpG, found in Alkaliphilus oremlandii (strain OhILAs) (Clostridium oremlandii (strain OhILAs)).